The primary structure comprises 691 residues: NADPH--cytochrome P450 reductase (691 aa).

The Lumenal segment spans residues 2-7 (PFGIDN). A helical transmembrane segment spans residues 8–24 (TDFTVLAGLVLAVLLYV). At 25–691 (KRNSIKELLM…TSGRYQEDVW (667 aa)) the chain is on the cytoplasmic side. The Flavodoxin-like domain occupies 61-204 (YLVLYASQTG…DYMAWKDSIL (144 aa)). FMN is bound by residues 67-72 (SQTGTA), Lys78, 116-119 (STYG), 152-161 (LGNSTYEFFN), and Asp187. An FAD-binding FR-type domain is found at 266 to 529 (SQPYIAPIVK…HVRRSNFRLP (264 aa)). NADP(+) is bound at residue Arg285. FAD-binding positions include 439-442 (RYYS), 457-459 (TSI), and 476-479 (GVTT). NADP(+) contacts are provided by residues Thr543, 610 to 611 (SR), 617 to 621 (KVYVQ), and Asp646. Lys666 is covalently cross-linked (Glycyl lysine isopeptide (Lys-Gly) (interchain with G-Cter in ubiquitin)). Position 691 (Trp691) interacts with FAD.

Belongs to the NADPH--cytochrome P450 reductase family. This sequence in the N-terminal section; belongs to the flavodoxin family. It in the C-terminal section; belongs to the flavoprotein pyridine nucleotide cytochrome reductase family. In terms of assembly, interacts with PCL1. It depends on FAD as a cofactor. FMN serves as cofactor. In terms of processing, phosphorylated by the cyclin-CDK PCL1-PHO85.

It localises to the endoplasmic reticulum membrane. Its subcellular location is the mitochondrion outer membrane. It is found in the cell membrane. The enzyme catalyses 2 oxidized [cytochrome P450] + NADPH = 2 reduced [cytochrome P450] + NADP(+) + H(+). In terms of biological role, this enzyme is required for electron transfer from NADP to cytochrome P450 in microsomes. It can also provide electron transfer to heme oxygenase and cytochrome B5. Involved in ergosterol biosynthesis. Has NADPH-dependent ferrireductase activity on the plasma membrane. This is NADPH--cytochrome P450 reductase from Saccharomyces cerevisiae (strain ATCC 204508 / S288c) (Baker's yeast).